Consider the following 794-residue polypeptide: E3 ubiquitin-protein ligase wwp-1 (794 aa).

The segment covering 1-16 (MARNEPSSQQPSSSGS) has biased composition (low complexity). 2 disordered regions span residues 1-31 (MARN…KPSK) and 155-198 (RSAG…AAPT). The 115-residue stretch at 10-124 (QPSSSGSNGT…TRNENGEFKN (115 aa)) folds into the C2 domain. A compositionally biased stretch (polar residues) spans 17-27 (NGTPAQQNGSA). Residues 161–186 (AETAASASSEASTSNGVATSSSARRP) are compositionally biased toward low complexity. 4 WW domains span residues 219-252 (EQLP…RPST), 253-286 (QPLP…RPTA), 324-358 (GPLP…DPRT), and 366-399 (QPLP…DPRT). The HECT domain maps to 460-794 (NAVDLRRRLY…IEMTEGFGNE (335 aa)). Cysteine 762 acts as the Glycyl thioester intermediate in catalysis.

As to quaternary structure, interacts (via WW domains) with Kruppel-like factor klf-1. Interacts with ubiquitin-conjugating enzyme E2 ubc-18. In terms of tissue distribution, expressed in neurons localized in the head and tail of adults.

It carries out the reaction S-ubiquitinyl-[E2 ubiquitin-conjugating enzyme]-L-cysteine + [acceptor protein]-L-lysine = [E2 ubiquitin-conjugating enzyme]-L-cysteine + N(6)-ubiquitinyl-[acceptor protein]-L-lysine.. Its pathway is protein modification; protein ubiquitination. E3 ubiquitin-protein ligase which accepts ubiquitin from an E2 ubiquitin-conjugating enzyme in the form of a thioester and then directly transfers the ubiquitin to targeted substrates. Ubiquitinates klf-1. Required for diet restriction-mediated lifespan extension, acting in concert with Kruppel-like factor klf-1 in the intestine to perhaps modulate genes involved in lipid metabolism. Probably acting downstream of the Insulin/IGF-1-like signaling (IIS) mediated pathway, plays a role in the immune response to infection by the Gram-negative bacterium P.aeruginosa, at least partly in response to bacterial pore-forming toxins. This Caenorhabditis elegans protein is E3 ubiquitin-protein ligase wwp-1.